Consider the following 159-residue polypeptide: Nucleotide-binding protein PSPTO_4393 (159 aa).

This sequence belongs to the YajQ family.

Functionally, nucleotide-binding protein. This Pseudomonas syringae pv. tomato (strain ATCC BAA-871 / DC3000) protein is Nucleotide-binding protein PSPTO_4393.